A 919-amino-acid chain; its full sequence is Probable disease resistance protein At4g27220 (919 aa).

2 coiled-coil regions span residues 1–30 (MFRS…LKRS) and 74–95 (VEIL…KKIS). The 279-residue stretch at 121-399 (MLDKLKDCLK…AEGLLDGQHH (279 aa)) folds into the NB-ARC domain. ATP is bound at residue 141 to 148 (GMGGVGKT). 8 LRR repeats span residues 447–468 (GEGF…QDKF), 469–492 (VSSV…VIEG), 494–516 (ETLV…FLQA), 519–540 (NLRI…FSNL), 542–564 (SLRS…ESLV), 565–587 (KLQF…EALS), 588–610 (SLRY…TILQ), and 611–635 (LSSL…EREG).

The protein belongs to the disease resistance NB-LRR family.

Functionally, probable disease resistance protein. The polypeptide is Probable disease resistance protein At4g27220 (Arabidopsis thaliana (Mouse-ear cress)).